A 348-amino-acid polypeptide reads, in one-letter code: Rhodopsin (348 aa).

At 1–33 (TEGPYFYVPMVNTTGIVRSPYEYPQYYLVNPAA) the chain is on the extracellular side. N12 is a glycosylation site (N-linked (GlcNAc...) asparagine). The chain crosses the membrane as a helical span at residues 34-58 (YAVLGAYMFFLIILGFPINFLTLYV). The Cytoplasmic portion of the chain corresponds to 59-70 (TLEHKKLRTPLN). Residues 71-93 (YILLNLAVADLFMVIGGFTTTMY) traverse the membrane as a helical segment. Topologically, residues 94 to 107 (SSMHGYFVLGRLGC) are extracellular. The cysteines at positions 107 and 184 are disulfide-linked. The helical transmembrane segment at 108 to 130 (NLEGFSATLGGMISLWSLAVLAI) threads the bilayer. The 'Ionic lock' involved in activated form stabilization signature appears at 131–133 (ERW). The Cytoplasmic portion of the chain corresponds to 131 to 149 (ERWVVVCKPISNFRFGENH). The helical transmembrane segment at 150–170 (AIMGVSLTWTMALACTVPPLV) threads the bilayer. Residues 171–199 (GWSRYIPEGMQCSCGIDYYTRAEGFNNES) lie on the Extracellular side of the membrane. N197 carries an N-linked (GlcNAc...) asparagine glycan. Residues 200–221 (FVLYMFFCHFMVPLIIIFFCYG) traverse the membrane as a helical segment. Topologically, residues 222 to 249 (RLLCAVKEAAAAQQESETTQRAEREVTR) are cytoplasmic. The helical transmembrane segment at 250–271 (MVILMVIGYLVCWLPYASVAWF) threads the bilayer. Residues 272 to 283 (IFTHQGSEFGPL) lie on the Extracellular side of the membrane. The helical transmembrane segment at 284-305 (FMTIPAFFAKSSSIYNPVIYIC) threads the bilayer. The residue at position 293 (K293) is an N6-(retinylidene)lysine. Topologically, residues 306-348 (MNKQFRNCMITTLFCGKNPFEGEEEGASSTKTEASSASSVSPA) are cytoplasmic. A lipid anchor (S-palmitoyl cysteine) is attached at C320. The segment at 327 to 348 (GEEEGASSTKTEASSASSVSPA) is disordered. Residues 332 to 348 (ASSTKTEASSASSVSPA) show a composition bias toward low complexity.

This sequence belongs to the G-protein coupled receptor 1 family. Opsin subfamily. Post-translationally, phosphorylated on some or all of the serine and threonine residues present in the C-terminal region. In terms of processing, contains one covalently linked retinal chromophore.

Its subcellular location is the membrane. The protein localises to the cell projection. It localises to the cilium. It is found in the photoreceptor outer segment. Functionally, photoreceptor required for image-forming vision at low light intensity. While most salt water fish species use retinal as chromophore, most freshwater fish use 3-dehydroretinal, or a mixture of retinal and 3-dehydroretinal. Light-induced isomerization of 11-cis to all-trans retinal triggers a conformational change that activates signaling via G-proteins. Subsequent receptor phosphorylation mediates displacement of the bound G-protein alpha subunit by arrestin and terminates signaling. The chain is Rhodopsin (rho) from Neoniphon argenteus (Clearfin squirrelfish).